Consider the following 145-residue polypeptide: Pseudoazurin (145 aa).

The N-terminal stretch at 1–22 (MFHHSLAAAAAALLALAAPGFA) is a signal peptide. A Plastocyanin-like domain is found at 27–115 (VHMLNKGESG…MGMVGLVQVG (89 aa)). Cu cation contacts are provided by His62, Cys100, His103, and Met108. The segment at 126–145 (TAKMPKKARERMDAELAQVN) is disordered.

In terms of assembly, homodimer. Cu cation is required as a cofactor.

The protein localises to the periplasm. Functionally, this soluble electron transfer copper protein is required for the inactivation of copper-containing nitrite reductase in the presence of oxygen. The protein is Pseudoazurin (pazS) of Paracoccus pantotrophus (Thiosphaera pantotropha).